We begin with the raw amino-acid sequence, 93 residues long: uncharacterized protein (93 aa).

Helical transmembrane passes span 15–35 (MAGLRVLSSMIELTAAIVMLV), 48–68 (ILAIVGPLIFIITMTVGIYQI), and 72–92 (LSYAKLILIFTGVVLILAGVH).

Its subcellular location is the cell membrane. This is an uncharacterized protein from Bacillus subtilis (strain 168).